Reading from the N-terminus, the 144-residue chain is Oleosin H2 (144 aa).

At Ala2 the chain carries N-acetylalanine. A run of 3 helical transmembrane segments spans residues 28 to 48, 53 to 73, and 75 to 95; these read VLAV…AGLI, IIGL…LVPA, and LTIA…ITAL. A Proline-knot motif is present at residues 61 to 72; that stretch reads PLFVIFSPILVP. Positions 124–144 are disordered; sequence QETVGQKTREAGQRSQDVIRP.

This sequence belongs to the oleosin family. As to expression, expressed in seeds (at protein level).

Its subcellular location is the lipid droplet. It localises to the membrane. May have a structural role to stabilize the lipid body during desiccation of the seed by preventing coalescence of the oil. Probably interacts with both lipid and phospholipid moieties of lipid bodies. May also provide recognition signals for specific lipase anchorage in lipolysis during seedling growth. The polypeptide is Oleosin H2 (Sesamum indicum (Oriental sesame)).